The primary structure comprises 141 residues: Hemoglobin subunit alpha-D (141 aa).

One can recognise a Globin domain in the interval 1–141; sequence MLTAEDKKLI…VAAVLAGKYR (141 aa). H58 and H87 together coordinate heme b.

It belongs to the globin family. In terms of assembly, heterotetramer of two alpha-D chains and two beta chains. As to expression, red blood cells.

Functionally, involved in oxygen transport from the lung to the various peripheral tissues. The sequence is that of Hemoglobin subunit alpha-D (HBAD) from Coturnix japonica (Japanese quail).